Reading from the N-terminus, the 346-residue chain is Olfactory receptor 8G5 (346 aa).

Over 1 to 60 (MIIYKQGITFLQKENNNTIHLNTMFFLSPAETHQRMAAENHSFVTKFILVGLTEKSELQL) the chain is Extracellular. Residues N16 and N40 are each glycosylated (N-linked (GlcNAc...) asparagine). A helical transmembrane segment spans residues 61 to 81 (PLFLVFLGIYVVTVLGNLGMI). Topologically, residues 82–89 (TLIGLSSH) are cytoplasmic. Residues 90–110 (LHTPMYCFLSSLSFIDFCHST) traverse the membrane as a helical segment. Residues 111 to 134 (VITPKMLVNFVTEKNIISYPECMT) lie on the Extracellular side of the membrane. A disulfide bridge connects residues C132 and C214. Residues 135 to 155 (QLYFFLVFAIAECHMLAAMAY) traverse the membrane as a helical segment. At 156 to 174 (DGYVAICSPLLYSIIISNK) the chain is on the cytoplasmic side. A helical membrane pass occupies residues 175 to 195 (ACFSLILVVYVIGLICASAHI). Residues 196 to 232 (GCMFRVQFCKFDVINHYFCDLISILKLSCSSTYINEL) are Extracellular-facing. The chain crosses the membrane as a helical span at residues 233-252 (LILIFSGINILVPSLTILSS). The Cytoplasmic portion of the chain corresponds to 253–272 (YIFIIASILRIRYTEGRSKA). A helical membrane pass occupies residues 273 to 293 (FSTCSSHISAVSVFFGSAAFM). The Extracellular segment spans residues 294–306 (YLQPSSVSSMDQG). Residues 307 to 327 (KVSSVFYTIVVPMLNPLIYSL) form a helical membrane-spanning segment. Residues 328 to 346 (RNKDVHVALKKTLGKRTFL) are Cytoplasmic-facing.

This sequence belongs to the G-protein coupled receptor 1 family.

It is found in the cell membrane. In terms of biological role, odorant receptor. This is Olfactory receptor 8G5 (OR8G5) from Homo sapiens (Human).